Here is a 155-residue protein sequence, read N- to C-terminus: Protein SREK1IP1 (155 aa).

The segment at 13–30 adopts a CCHC-type zinc-finger fold; that stretch reads AGCKKCGYPGHLTFECRN. Positions 43–155 are disordered; that stretch reads DVSSTSTEDS…SSSSQSSSSD (113 aa). Residues 58-74 show a composition bias toward basic and acidic residues; the sequence is EVARAPADKKNVTDTGK. Basic residues predominate over residues 75–93; the sequence is KKLKRKKEKKLKKHRKRLH. Over residues 94-103 the composition is skewed to basic and acidic residues; that stretch reads SSSESDDNSK. A compositionally biased stretch (basic residues) spans 104-137; that stretch reads AKKRKSQKKEKRVKHKAKKGKQHKKDKRKEKRER. The segment covering 140–155 has biased composition (low complexity); the sequence is SSSSSSSSSSQSSSSD.

In terms of biological role, possible splicing regulator involved in the control of cellular survival. The sequence is that of Protein SREK1IP1 (srek1ip1) from Xenopus tropicalis (Western clawed frog).